Reading from the N-terminus, the 1155-residue chain is DNA-directed RNA polymerase subunit beta (1155 aa).

Belongs to the RNA polymerase beta chain family. As to quaternary structure, the RNAP catalytic core consists of 2 alpha, 1 beta, 1 beta' and 1 omega subunit. When a sigma factor is associated with the core the holoenzyme is formed, which can initiate transcription.

It catalyses the reaction RNA(n) + a ribonucleoside 5'-triphosphate = RNA(n+1) + diphosphate. Functionally, DNA-dependent RNA polymerase catalyzes the transcription of DNA into RNA using the four ribonucleoside triphosphates as substrates. This is DNA-directed RNA polymerase subunit beta from Borrelia turicatae (strain 91E135).